We begin with the raw amino-acid sequence, 311 residues long: Malate dehydrogenase (311 aa).

Residues 10 to 15 (GAGRVG) and Asp-35 contribute to the NAD(+) site. Residues Arg-84 and Arg-90 each coordinate substrate. NAD(+) is bound by residues Asn-97 and 120 to 122 (VTN). Substrate contacts are provided by Asn-122 and Arg-153. His-177 serves as the catalytic Proton acceptor.

This sequence belongs to the LDH/MDH superfamily. MDH type 3 family.

The catalysed reaction is (S)-malate + NAD(+) = oxaloacetate + NADH + H(+). Catalyzes the reversible oxidation of malate to oxaloacetate. The polypeptide is Malate dehydrogenase (Nitrosococcus oceani (strain ATCC 19707 / BCRC 17464 / JCM 30415 / NCIMB 11848 / C-107)).